Consider the following 62-residue polypeptide: Large ribosomal subunit protein uL29 (62 aa).

This sequence belongs to the universal ribosomal protein uL29 family.

This chain is Large ribosomal subunit protein uL29, found in Vesicomyosocius okutanii subsp. Calyptogena okutanii (strain HA).